The following is a 151-amino-acid chain: UPF0208 membrane protein PC1_2779 (151 aa).

2 helical membrane-spanning segments follow: residues 46–66 (FGIR…IALG) and 69–89 (LGPA…GLWW).

This sequence belongs to the UPF0208 family.

The protein localises to the cell inner membrane. This Pectobacterium carotovorum subsp. carotovorum (strain PC1) protein is UPF0208 membrane protein PC1_2779.